The following is a 267-amino-acid chain: Hydroxyacylglutathione hydrolase (267 aa).

Histidine 55, histidine 57, aspartate 59, histidine 60, histidine 121, aspartate 138, and histidine 176 together coordinate Zn(2+).

This sequence belongs to the metallo-beta-lactamase superfamily. Glyoxalase II family. As to quaternary structure, monomer. The cofactor is Zn(2+).

The catalysed reaction is an S-(2-hydroxyacyl)glutathione + H2O = a 2-hydroxy carboxylate + glutathione + H(+). Its pathway is secondary metabolite metabolism; methylglyoxal degradation; (R)-lactate from methylglyoxal: step 2/2. In terms of biological role, thiolesterase that catalyzes the hydrolysis of S-D-lactoyl-glutathione to form glutathione and D-lactic acid. The chain is Hydroxyacylglutathione hydrolase from Shewanella oneidensis (strain ATCC 700550 / JCM 31522 / CIP 106686 / LMG 19005 / NCIMB 14063 / MR-1).